Reading from the N-terminus, the 804-residue chain is MLVSYRWLGEYVDLTGITAKELAERITKSGIEVERVEALDRGMKGVVIGHVLECEPHPNADKLRKCLVDLGEDEPVQIICGAPNVAKGQKVAVAKVGAVLPGNFKIKRAKLRGEESNGMICSLQELGVETKVVPKEYADGIFVFPSDAPIGADAIEWLGLHDEVLELSLTPNRADCLSMIGVAYEVAAILGRDVKLPEAAVKENSEHVHEYISVRVEAPEDNPLYAGRIVKNVRIGPSPLWMQARLMAAGIRPHNNVVDITNYILLEYGQPLHAFDYDRLGSKEIVVRRAKAGETIITLDDVERKLTEEHLVITNGREPVALAGVMGGANSEVRDDTTTVFIEAAYFTSPVIRQAVKDHGLRSEASTRFEKGIDPARTKEALERAAALMSEYAGGEVVGGIVEASVWRQDSVVVTVTLERINGVLGTAMSKEEVAAILSNLQFPFTEDNGTFTIHVPSRRRDIAIEEDIIEEVARLYGYDRLPATLPVAEAKPGGLTPYQAKRRRVRRYLEGAGLFQAITYSLTSPDKATRFALETAEPIRLALPMSEERSVLRQSLIPHLLEAASYNRARQVENVALYEIGSVYLSKGEHVQPAENERLAGVLTGLWHAHLWQGEKKAADFYVAKGILDGLFDLFGLAARIEYKPAKRADLHPGRTAEIALGGKVIGFVGQLHPAVQKEYDLKETYVFELALTDLLNAESEAIRYEPIPRFPSVVRDIALVVDENVEAGALKQAIEEAGKPLVKDVSLFDVYKGDRLPDGKKSLAFSLRYYDPERTLTDEEVAAVHERVLAAVEKQFGAVLRG.

The tRNA-binding domain occupies 40 to 155; the sequence is DRGMKGVVIG…SDAPIGADAI (116 aa). The region spanning 409-484 is the B5 domain; the sequence is QDSVVVTVTL…RLYGYDRLPA (76 aa). D462, D468, E471, and E472 together coordinate Mg(2+). The 94-residue stretch at 710–803 folds into the FDX-ACB domain; it reads PRFPSVVRDI…VEKQFGAVLR (94 aa).

Belongs to the phenylalanyl-tRNA synthetase beta subunit family. Type 1 subfamily. In terms of assembly, tetramer of two alpha and two beta subunits. Mg(2+) is required as a cofactor.

The protein resides in the cytoplasm. The enzyme catalyses tRNA(Phe) + L-phenylalanine + ATP = L-phenylalanyl-tRNA(Phe) + AMP + diphosphate + H(+). In Geobacillus kaustophilus (strain HTA426), this protein is Phenylalanine--tRNA ligase beta subunit.